Here is a 299-residue protein sequence, read N- to C-terminus: Ethylmalonyl-CoA decarboxylase (299 aa).

The protein belongs to the enoyl-CoA hydratase/isomerase family.

It is found in the cytoplasm. The protein localises to the cytosol. The catalysed reaction is (2S)-ethylmalonyl-CoA + H(+) = butanoyl-CoA + CO2. It catalyses the reaction (S)-methylmalonyl-CoA + H(+) = propanoyl-CoA + CO2. It carries out the reaction (2R)-ethylmalonyl-CoA + H(+) = butanoyl-CoA + CO2. Its function is as follows. Decarboxylates ethylmalonyl-CoA, a potentially toxic metabolite, to form butyryl-CoA, suggesting it might be involved in metabolite proofreading. Acts preferentially on (S)-ethylmalonyl-CoA but also has some activity on the (R)-isomer. Also has methylmalonyl-CoA decarboxylase activity at lower level. This is Ethylmalonyl-CoA decarboxylase (echdc1) from Xenopus tropicalis (Western clawed frog).